The chain runs to 202 residues: Small ribosomal subunit protein uS4c (202 aa).

In terms of domain architecture, S4 RNA-binding spans 90-154 (MRLDNIIFRL…SQSIITKNLN (65 aa)).

Belongs to the universal ribosomal protein uS4 family. Part of the 30S ribosomal subunit. Contacts protein S5. The interaction surface between S4 and S5 is involved in control of translational fidelity.

It is found in the plastid. The protein localises to the chloroplast. Its function is as follows. One of the primary rRNA binding proteins, it binds directly to 16S rRNA where it nucleates assembly of the body of the 30S subunit. In terms of biological role, with S5 and S12 plays an important role in translational accuracy. The polypeptide is Small ribosomal subunit protein uS4c (rps4) (Ricciocarpos natans (Liverwort)).